The following is a 903-amino-acid chain: Alanine--tRNA ligase (903 aa).

Zn(2+)-binding residues include His-581, His-585, Cys-693, and His-697.

This sequence belongs to the class-II aminoacyl-tRNA synthetase family. Requires Zn(2+) as cofactor.

The protein localises to the cytoplasm. It carries out the reaction tRNA(Ala) + L-alanine + ATP = L-alanyl-tRNA(Ala) + AMP + diphosphate. In terms of biological role, catalyzes the attachment of alanine to tRNA(Ala) in a two-step reaction: alanine is first activated by ATP to form Ala-AMP and then transferred to the acceptor end of tRNA(Ala). Also edits incorrectly charged Ser-tRNA(Ala) and Gly-tRNA(Ala) via its editing domain. The polypeptide is Alanine--tRNA ligase (Psychrobacter sp. (strain PRwf-1)).